A 251-amino-acid polypeptide reads, in one-letter code: 7-cyano-7-deazaguanine synthase (251 aa).

Positions 1–21 are disordered; sequence MSDLPRHSPRRQHAGESAVTA. 35 to 45 serves as a coordination point for ATP; that stretch reads YSGGMDSYTVL. Residues Cys212, Cys220, Cys223, and Cys226 each coordinate Zn(2+).

It belongs to the QueC family. Requires Zn(2+) as cofactor.

It carries out the reaction 7-carboxy-7-deazaguanine + NH4(+) + ATP = 7-cyano-7-deazaguanine + ADP + phosphate + H2O + H(+). It functions in the pathway purine metabolism; 7-cyano-7-deazaguanine biosynthesis. Catalyzes the ATP-dependent conversion of 7-carboxy-7-deazaguanine (CDG) to 7-cyano-7-deazaguanine (preQ(0)). In Chromohalobacter salexigens (strain ATCC BAA-138 / DSM 3043 / CIP 106854 / NCIMB 13768 / 1H11), this protein is 7-cyano-7-deazaguanine synthase.